A 213-amino-acid chain; its full sequence is FMN-dependent NADH:quinone oxidoreductase (213 aa).

Belongs to the azoreductase type 1 family. Homodimer. The cofactor is FMN.

The catalysed reaction is 2 a quinone + NADH + H(+) = 2 a 1,4-benzosemiquinone + NAD(+). It catalyses the reaction N,N-dimethyl-1,4-phenylenediamine + anthranilate + 2 NAD(+) = 2-(4-dimethylaminophenyl)diazenylbenzoate + 2 NADH + 2 H(+). In terms of biological role, quinone reductase that provides resistance to thiol-specific stress caused by electrophilic quinones. Its function is as follows. Also exhibits azoreductase activity. Catalyzes the reductive cleavage of the azo bond in aromatic azo compounds to the corresponding amines. The protein is FMN-dependent NADH:quinone oxidoreductase of Streptococcus agalactiae serotype III (strain NEM316).